Reading from the N-terminus, the 497-residue chain is Meiosis-specific serine/threonine-protein kinase MEK1 (497 aa).

The region spanning 47 to 102 is the FHA domain; sequence VKVGRNDKECQLVLTNPSISSVHCVFWCVFFDEDSIPMFYVKDCSLNGTYLNGLLL. In terms of domain architecture, Protein kinase spans 162-444; sequence EITNRIVGNG…SKQGLKHIWI (283 aa). ATP contacts are provided by residues 168 to 176 and Lys199; that span reads VGNGTFGHV. Asp290 serves as the catalytic Proton acceptor.

This sequence belongs to the protein kinase superfamily. CAMK Ser/Thr protein kinase family. CHEK2 subfamily.

The enzyme catalyses L-seryl-[protein] + ATP = O-phospho-L-seryl-[protein] + ADP + H(+). It carries out the reaction L-threonyl-[protein] + ATP = O-phospho-L-threonyl-[protein] + ADP + H(+). Functionally, probable protein kinase required for meiotic recombination. The polypeptide is Meiosis-specific serine/threonine-protein kinase MEK1 (MEK1) (Saccharomyces cerevisiae (strain ATCC 204508 / S288c) (Baker's yeast)).